Reading from the N-terminus, the 401-residue chain is ATP phosphoribosyltransferase regulatory subunit (401 aa).

The protein belongs to the class-II aminoacyl-tRNA synthetase family. HisZ subfamily. Heteromultimer composed of HisG and HisZ subunits.

The protein resides in the cytoplasm. Its pathway is amino-acid biosynthesis; L-histidine biosynthesis; L-histidine from 5-phospho-alpha-D-ribose 1-diphosphate: step 1/9. Functionally, required for the first step of histidine biosynthesis. May allow the feedback regulation of ATP phosphoribosyltransferase activity by histidine. The protein is ATP phosphoribosyltransferase regulatory subunit of Desulforamulus reducens (strain ATCC BAA-1160 / DSM 100696 / MI-1) (Desulfotomaculum reducens).